Here is a 645-residue protein sequence, read N- to C-terminus: Acetyl-coenzyme A synthetase (645 aa).

CoA is bound by residues 190 to 193 and Thr308; that span reads RGGK. Residues 384 to 386, 408 to 413, Asp497, and Arg512 each bind ATP; these read GEP and DTWWQT. Position 520 (Ser520) interacts with CoA. ATP is bound at residue Arg523. Val534, His536, and Ile539 together coordinate Mg(2+). Lys606 is modified (N6-acetyllysine).

Belongs to the ATP-dependent AMP-binding enzyme family. Requires Mg(2+) as cofactor. Acetylated. Deacetylation by the SIR2-homolog deacetylase activates the enzyme.

It carries out the reaction acetate + ATP + CoA = acetyl-CoA + AMP + diphosphate. Functionally, catalyzes the conversion of acetate into acetyl-CoA (AcCoA), an essential intermediate at the junction of anabolic and catabolic pathways. AcsA undergoes a two-step reaction. In the first half reaction, AcsA combines acetate with ATP to form acetyl-adenylate (AcAMP) intermediate. In the second half reaction, it can then transfer the acetyl group from AcAMP to the sulfhydryl group of CoA, forming the product AcCoA. This chain is Acetyl-coenzyme A synthetase, found in Alcanivorax borkumensis (strain ATCC 700651 / DSM 11573 / NCIMB 13689 / SK2).